The sequence spans 218 residues: Probable nicotinate-nucleotide adenylyltransferase (218 aa).

The protein belongs to the NadD family.

It catalyses the reaction nicotinate beta-D-ribonucleotide + ATP + H(+) = deamido-NAD(+) + diphosphate. Its pathway is cofactor biosynthesis; NAD(+) biosynthesis; deamido-NAD(+) from nicotinate D-ribonucleotide: step 1/1. Its function is as follows. Catalyzes the reversible adenylation of nicotinate mononucleotide (NaMN) to nicotinic acid adenine dinucleotide (NaAD). This is Probable nicotinate-nucleotide adenylyltransferase from Burkholderia lata (strain ATCC 17760 / DSM 23089 / LMG 22485 / NCIMB 9086 / R18194 / 383).